Reading from the N-terminus, the 205-residue chain is Glycerol-3-phosphate acyltransferase (205 aa).

Over 1 to 3 the chain is Periplasmic; the sequence is MSA. The chain crosses the membrane as a helical span at residues 4-24; sequence IAPGMILFAYLCGSISSAILV. The Cytoplasmic segment spans residues 25 to 52; that stretch reads CRLCGLPDPRTSGSGNPGATNVLRMGGK. Residues 53-73 traverse the membrane as a helical segment; it reads GAALAVLIFDVLKGMLPVWGA. The Periplasmic segment spans residues 74–80; it reads YELGVSP. The chain crosses the membrane as a helical span at residues 81–101; that stretch reads FWLGLIAIAACLGHIWPIFFG. The Cytoplasmic segment spans residues 102–111; sequence FKGGKGVATA. The chain crosses the membrane as a helical span at residues 112–132; that stretch reads FGAIAPIGWDLTGVMAGTWLL. At 133-137 the chain is on the periplasmic side; the sequence is TVLLS. Residues 138-158 traverse the membrane as a helical segment; that stretch reads GYSSLGAIVSALIAPFYVWWF. The Cytoplasmic segment spans residues 159–205; the sequence is KPQFTFPVSMLSCLILLRHHDNIQRLWRRQETKIWTKLKRKREKDPE.

This sequence belongs to the PlsY family. As to quaternary structure, probably interacts with PlsX.

It is found in the cell inner membrane. It carries out the reaction sn-glycerol 3-phosphate + an acyl-CoA = a 1-acyl-sn-glycero-3-phosphate + CoA. The catalysed reaction is a fatty acyl-[ACP] + sn-glycerol 3-phosphate = a 1-acyl-sn-glycero-3-phosphate + holo-[ACP]. It functions in the pathway lipid metabolism; phospholipid metabolism. Catalyzes the transfer of an acyl group from acyl-ACP to glycerol-3-phosphate (G3P) to form lysophosphatidic acid (LPA). This enzyme can also utilize acyl-CoA as fatty acyl donor, but not acyl-PO(4). This chain is Glycerol-3-phosphate acyltransferase, found in Escherichia fergusonii (strain ATCC 35469 / DSM 13698 / CCUG 18766 / IAM 14443 / JCM 21226 / LMG 7866 / NBRC 102419 / NCTC 12128 / CDC 0568-73).